The sequence spans 174 residues: ATP-dependent protease subunit HslV (174 aa).

Thr2 is an active-site residue. Gly157, Cys160, and Thr163 together coordinate Na(+).

The protein belongs to the peptidase T1B family. HslV subfamily. As to quaternary structure, a double ring-shaped homohexamer of HslV is capped on each side by a ring-shaped HslU homohexamer. The assembly of the HslU/HslV complex is dependent on binding of ATP.

The protein localises to the cytoplasm. The enzyme catalyses ATP-dependent cleavage of peptide bonds with broad specificity.. Allosterically activated by HslU binding. Functionally, protease subunit of a proteasome-like degradation complex believed to be a general protein degrading machinery. The protein is ATP-dependent protease subunit HslV of Shewanella halifaxensis (strain HAW-EB4).